The following is a 204-amino-acid chain: Ribonuclease HII (204 aa).

Positions 13 to 204 (GPVAGCDEAG…VRRAARLHSS (192 aa)) constitute an RNase H type-2 domain. A divalent metal cation is bound by residues aspartate 19, glutamate 20, and aspartate 113.

This sequence belongs to the RNase HII family. It depends on Mn(2+) as a cofactor. Mg(2+) serves as cofactor.

It is found in the cytoplasm. It carries out the reaction Endonucleolytic cleavage to 5'-phosphomonoester.. Its function is as follows. Endonuclease that specifically degrades the RNA of RNA-DNA hybrids. In Cutibacterium acnes (strain DSM 16379 / KPA171202) (Propionibacterium acnes), this protein is Ribonuclease HII.